Here is a 598-residue protein sequence, read N- to C-terminus: Autophagy-related protein 22-1 (598 aa).

The tract at residues 1 to 20 is disordered; sequence MEDGGAGLRAPRYPAEDTSP. A helical membrane pass occupies residues 28–48; it reads GFFCYGLAAEVFAVCAVGSFL. N-linked (GlcNAc...) asparagine glycosylation is found at Asn-74 and Asn-80. Transmembrane regions (helical) follow at residues 111–131, 159–179, and 182–202; these read SFAM…LVSV, FLLV…ICVV, and GCSF…HPVV. Residues 207–238 form a disordered region; the sequence is DHPTASSSIPLQPISPQRSSRKSEESLHQVNR. The span at 212-224 shows a compositional bias: low complexity; that stretch reads SSSIPLQPISPQR. The span at 227-238 shows a compositional bias: basic and acidic residues; the sequence is RKSEESLHQVNR. Residues 263-283 form a helical membrane-spanning segment; it reads VGIGYMAAVSVQVICILILYI. Asn-285 carries an N-linked (GlcNAc...) asparagine glycan. The next 7 membrane-spanning stretches (helical) occupy residues 297 to 317, 363 to 383, 400 to 420, 431 to 451, 465 to 485, 489 to 509, and 534 to 554; these read TVLF…VMWL, VLLF…ISAT, ALLS…WPII, IIVC…LGFL, WYEI…LSSY, FYGL…FAIT, and AFGF…MVDV. Residues 575–598 form a disordered region; the sequence is HEDFESFEGSSDGHEAEGLMRDHD. Residues 585 to 598 are compositionally biased toward basic and acidic residues; that stretch reads SDGHEAEGLMRDHD.

Belongs to the ATG22 family.

It is found in the vacuole membrane. Vacuolar effluxer which mediate the efflux of amino acids resulting from autophagic degradation. The release of autophagic amino acids allows the maintenance of protein synthesis and viability during nitrogen starvation. In Sclerotinia sclerotiorum (strain ATCC 18683 / 1980 / Ss-1) (White mold), this protein is Autophagy-related protein 22-1 (atg22-1).